The sequence spans 319 residues: Acetyl esterase (319 aa).

Residues 91–93 (HGG) carry the Involved in the stabilization of the negatively charged intermediate by the formation of the oxyanion hole motif. Catalysis depends on residues S165, D262, and H292.

Belongs to the 'GDXG' lipolytic enzyme family. Homodimer. Interacts with MalT and MelA.

The protein resides in the cytoplasm. Its function is as follows. Displays esterase activity towards short chain fatty esters (acyl chain length of up to 8 carbons). Able to hydrolyze triacetylglycerol (triacetin) and tributyrylglycerol (tributyrin), but not trioleylglycerol (triolein) or cholesterol oleate. Negatively regulates MalT activity by antagonizing maltotriose binding. Inhibits MelA galactosidase activity. This is Acetyl esterase from Escherichia coli O127:H6 (strain E2348/69 / EPEC).